The following is a 283-amino-acid chain: Coiled-coil domain-containing protein 107 (283 aa).

The first 24 residues, 1-24 (MAGAVSLLGVVGLLLVSALSGVLG), serve as a signal peptide directing secretion. A disordered region spans residues 30-62 (DLRAHPGNAAHPGSGATEPRRRPPLKDQRERTR). Basic and acidic residues predominate over residues 47–62 (EPRRRPPLKDQRERTR). A helical membrane pass occupies residues 65–85 (SLPLGALYTAAVAAFVLYKCL). Positions 104-134 (LQSEQQLAQLTQQLAQTEQHLNNLMAQLDPL) form a coiled coil. 2 disordered regions span residues 164 to 207 (KPDK…SRPL) and 258 to 283 (AKGP…SLFS). Residues 176–187 (EGSGGESAGGGD) are compositionally biased toward gly residues.

Its subcellular location is the membrane. This Homo sapiens (Human) protein is Coiled-coil domain-containing protein 107 (CCDC107).